The sequence spans 206 residues: Putative type I restriction enzyme MpnIIP endonuclease subunit C-terminal part (206 aa).

In terms of biological role, the C-terminal section of a putative type I restriction enzyme that if reconstituted might recognize 5'-GAN(7)TAY-3' and cleave a random distance away. Subunit R is required for both nuclease and ATPase activities, but not for modification. This Mycoplasma pneumoniae (strain ATCC 29342 / M129 / Subtype 1) (Mycoplasmoides pneumoniae) protein is Putative type I restriction enzyme MpnIIP endonuclease subunit C-terminal part.